The chain runs to 78 residues: Pigment-dispersing hormone 1 peptides (78 aa).

Positions 1-22 are cleaved as a signal peptide; it reads MRSSVIVAVLVVVALAALLTQG. Alanine 75 carries the post-translational modification Alanine amide.

This sequence belongs to the arthropod PDH family. In terms of tissue distribution, eyestalk sinus gland.

Its subcellular location is the secreted. Its function is as follows. The pigment-dispersing hormone causes the migration of the distal retinal pigment into the proximal end of the pigment chromatophore cells and thus decreases the amount of light entering the retinulas. May also function as a neurotransmitter and/or neuromodulator. The polypeptide is Pigment-dispersing hormone 1 peptides (PDH1) (Callinectes sapidus (Blue crab)).